Reading from the N-terminus, the 302-residue chain is Quinolinate synthase (302 aa).

Positions 24 and 41 each coordinate iminosuccinate. Cys86 is a [4Fe-4S] cluster binding site. Residues 112-114 (YVN) and Ser129 contribute to the iminosuccinate site. Cys173 contacts [4Fe-4S] cluster. Iminosuccinate-binding positions include 199-201 (HPE) and Thr216. Cys259 lines the [4Fe-4S] cluster pocket.

The protein belongs to the quinolinate synthase family. Type 2 subfamily. [4Fe-4S] cluster is required as a cofactor.

It is found in the cytoplasm. It carries out the reaction iminosuccinate + dihydroxyacetone phosphate = quinolinate + phosphate + 2 H2O + H(+). It functions in the pathway cofactor biosynthesis; NAD(+) biosynthesis; quinolinate from iminoaspartate: step 1/1. Its function is as follows. Catalyzes the condensation of iminoaspartate with dihydroxyacetone phosphate to form quinolinate. The sequence is that of Quinolinate synthase from Thermococcus onnurineus (strain NA1).